The following is a 207-amino-acid chain: Large ribosomal subunit protein uL4 (207 aa).

Residues 45–89 (RQGTHKVKTRSEVRGGGRKPWRQKGTGRARQGSIRSPQWRGGGTV) are disordered. Basic residues predominate over residues 60 to 71 (GGRKPWRQKGTG).

This sequence belongs to the universal ribosomal protein uL4 family. Part of the 50S ribosomal subunit.

In terms of biological role, one of the primary rRNA binding proteins, this protein initially binds near the 5'-end of the 23S rRNA. It is important during the early stages of 50S assembly. It makes multiple contacts with different domains of the 23S rRNA in the assembled 50S subunit and ribosome. Its function is as follows. Forms part of the polypeptide exit tunnel. In Bacillus anthracis (strain A0248), this protein is Large ribosomal subunit protein uL4.